The primary structure comprises 242 residues: Probable transcriptional regulatory protein Bamb_2332 (242 aa).

The protein belongs to the TACO1 family.

It is found in the cytoplasm. The sequence is that of Probable transcriptional regulatory protein Bamb_2332 from Burkholderia ambifaria (strain ATCC BAA-244 / DSM 16087 / CCUG 44356 / LMG 19182 / AMMD) (Burkholderia cepacia (strain AMMD)).